A 662-amino-acid chain; its full sequence is ABC transporter G family member 17 (662 aa).

The ABC transporter domain maps to 22-276; sequence LAFNDLTYNV…FSEFGSPIPE (255 aa). 69–76 serves as a coordination point for ATP; sequence GASGAGKS. Residues 356 to 566 enclose the ABC transmembrane type-2 domain; sequence VETVILAKRY…PYEAVLHNEF (211 aa). 6 helical membrane-spanning segments follow: residues 375–395, 410–430, 451–471, 486–508, 514–536, and 635–655; these read LIGT…TVYW, FFSF…PAFI, VISH…GFAA, FIYY…TFVS, VMMS…GFYV, and LWVT…SLLL.

It belongs to the ABC transporter superfamily. ABCG family. Eye pigment precursor importer (TC 3.A.1.204) subfamily.

Its subcellular location is the membrane. The polypeptide is ABC transporter G family member 17 (ABCG17) (Arabidopsis thaliana (Mouse-ear cress)).